The following is a 494-amino-acid chain: Aspartyl/glutamyl-tRNA(Asn/Gln) amidotransferase subunit B (494 aa).

This sequence belongs to the GatB/GatE family. GatB subfamily. As to quaternary structure, heterotrimer of A, B and C subunits.

It carries out the reaction L-glutamyl-tRNA(Gln) + L-glutamine + ATP + H2O = L-glutaminyl-tRNA(Gln) + L-glutamate + ADP + phosphate + H(+). It catalyses the reaction L-aspartyl-tRNA(Asn) + L-glutamine + ATP + H2O = L-asparaginyl-tRNA(Asn) + L-glutamate + ADP + phosphate + 2 H(+). In terms of biological role, allows the formation of correctly charged Asn-tRNA(Asn) or Gln-tRNA(Gln) through the transamidation of misacylated Asp-tRNA(Asn) or Glu-tRNA(Gln) in organisms which lack either or both of asparaginyl-tRNA or glutaminyl-tRNA synthetases. The reaction takes place in the presence of glutamine and ATP through an activated phospho-Asp-tRNA(Asn) or phospho-Glu-tRNA(Gln). This chain is Aspartyl/glutamyl-tRNA(Asn/Gln) amidotransferase subunit B, found in Trichodesmium erythraeum (strain IMS101).